Consider the following 289-residue polypeptide: Proteasome assembly chaperone 1 (289 aa).

Residues 1 to 38 (MAATFFGEVVKAPCRAGTEEEEEEEEQSRRDTPEDREV) form a disordered region. At Ala-2 the chain carries N-acetylalanine. Thr-18 carries the post-translational modification Phosphothreonine. The span at 27 to 38 (QSRRDTPEDREV) shows a compositional bias: basic and acidic residues. Phosphothreonine is present on Thr-55. The residue at position 181 (Ser-181) is a Phosphoserine. The residue at position 265 (Lys-265) is an N6-acetyllysine.

Belongs to the PSMG1 family. As to quaternary structure, forms a heterodimer with PSMG2. The PSMG1-PSMG2 heterodimer interacts directly with the PSMA5 and PSMA7 proteasome alpha subunits. Post-translationally, degraded by the proteasome upon completion of 20S proteasome maturation. As to expression, highly expressed in testis with moderate expression in brain, liver and kidney and low levels in heart, skeletal muscle and pancreas.

The protein localises to the cytoplasm. It localises to the endoplasmic reticulum. In terms of biological role, chaperone protein which promotes assembly of the 20S proteasome as part of a heterodimer with PSMG2. The PSMG1-PSMG2 heterodimer binds to the PSMA5 and PSMA7 proteasome subunits, promotes assembly of the proteasome alpha subunits into the heteroheptameric alpha ring and prevents alpha ring dimerization. The protein is Proteasome assembly chaperone 1 of Mus musculus (Mouse).